The chain runs to 449 residues: F-box/LRR-repeat protein At3g60040 (449 aa).

Positions 12 to 64 constitute an F-box domain; that stretch reads RDAISWLPDEVLGKILSLIPTKQAVSTSLLAKKWRTIFRLVDHLELDDSFSLQ. LRR repeat units follow at residues 161 to 188, 191 to 215, 216 to 237, 239 to 263, 287 to 312, and 340 to 365; these read LTLG…FIDT, FYDI…SVHH, HDFI…SVDY, CPDD…EYSH, ERKV…HLSP, and KNKR…IVKD.

The sequence is that of F-box/LRR-repeat protein At3g60040 from Arabidopsis thaliana (Mouse-ear cress).